The following is a 505-amino-acid chain: Ribose import ATP-binding protein RbsA 1 (505 aa).

2 ABC transporter domains span residues 13 to 249 and 254 to 503; these read LALR…VGRD and YPKQ…TGRA. 45-52 contributes to the ATP binding site; that stretch reads GENGAGKS.

This sequence belongs to the ABC transporter superfamily. Ribose importer (TC 3.A.1.2.1) family. As to quaternary structure, the complex is composed of an ATP-binding protein (RbsA), two transmembrane proteins (RbsC) and a solute-binding protein (RbsB).

The protein localises to the cell membrane. The catalysed reaction is D-ribose(out) + ATP + H2O = D-ribose(in) + ADP + phosphate + H(+). Functionally, part of the ABC transporter complex RbsABC involved in ribose import. Responsible for energy coupling to the transport system. The sequence is that of Ribose import ATP-binding protein RbsA 1 from Streptomyces coelicolor (strain ATCC BAA-471 / A3(2) / M145).